The sequence spans 151 residues: Probable desiccation-related protein LEA14 (151 aa).

Belongs to the LEA type 2 family.

The polypeptide is Probable desiccation-related protein LEA14 (LEA14) (Arabidopsis thaliana (Mouse-ear cress)).